Consider the following 232-residue polypeptide: Homeobox protein Rhox13 (232 aa).

The tract at residues 45–114 (QAAVASSHDS…EAAAPSVAAV (70 aa)) is disordered. Positions 68 to 105 (SDSESESDSESESDSSDSSDESDDDSSTSDEDTSDPEE) are enriched in acidic residues. Residues 148 to 207 (RRGPPFHFAQWQVEEMESLFEETQYPDLLTRGELARTLNVPEVKVKVWFTNRRAKQRKIE) constitute a DNA-binding region (homeobox).

The protein belongs to the paired-like homeobox family.

It localises to the nucleus. Its function is as follows. Probable transcription factor. This is Homeobox protein Rhox13 from Mus musculus (Mouse).